The sequence spans 431 residues: MSLSRSLDLTQEDYAVQDAILQYISSNFVSLKPPDVKFFKRHLENVTKVLIQMMRKEDNLFNLIFQKERVAGSFWDKLKIGHPIEFDKNFVLTLPPALYKNIKFTPASPSYVTVNVQNGLKIVKSSKCRTYRPDWFDDNGNILSDKLRFWMESVVNKALATLPPLPNKKYQLEIEGTCYEIGTRKSGPAVTVEVNIDSSGSTYLGITQFCIDLVPAFEFQTKDWPHHIRQCPADTQDKTWNLVPKPLKPEENTADGNIPARLQWRLSFHNQESYIIHNLNHFKAVLKLLKKLRDVKFDQYKMSSYALKTVFMLEKERQNNDFWRRPLSSTFLHMLTVLTEWYGKGKIPFYWDKQHNLLGKLSKDQIKQVYCTLQKINNRIYEGLQSKCESKCDHFIIASTLLDSEELLKIKKDIIVDRSGNKPLAKRQRCS.

Residues S73 and 85 to 87 each bind ATP; that span reads EFD. Residues E85, D87, and D212 each coordinate Mg(2+). Residue D212 participates in GTP binding. ATP contacts are provided by residues K290 and 304–308; that span reads SYALK. E316 contributes to the Mn(2+) binding site.

Belongs to the mab-21 family. Mg(2+) serves as cofactor. It depends on Mn(2+) as a cofactor.

The enzyme catalyses GTP + ATP = 2',3'-cGAMP + 2 diphosphate. It catalyses the reaction GTP + ATP = pppGp(2'-5')A + diphosphate. It carries out the reaction pppGp(2'-5')A = 2',3'-cGAMP + diphosphate. Functionally, nucleotidyltransferase that catalyzes the formation of cyclic GMP-AMP (2',3'-cGAMP) from ATP and GTP and plays a key role in innate immunity. Acts as a key sensor of double-stranded RNA (dsRNA), the presence of dsRNA in the cytoplasm being a danger signal that triggers the immune responses. Directly binds dsRNA, activating the nucleotidyltransferase activity, leading to synthesis of 2',3'-cGAMP, a second messenger that binds to and activates Sting, thereby triggering the immune response via activation of the NF-kappa-B transcription factor. This Frankliniella occidentalis (Western flower thrips) protein is Cyclic GMP-AMP synthase-like receptor.